Consider the following 205-residue polypeptide: Outer-membrane lipoprotein carrier protein (205 aa).

An N-terminal signal peptide occupies residues M1–A21.

The protein belongs to the LolA family. In terms of assembly, monomer.

The protein localises to the periplasm. Its function is as follows. Participates in the translocation of lipoproteins from the inner membrane to the outer membrane. Only forms a complex with a lipoprotein if the residue after the N-terminal Cys is not an aspartate (The Asp acts as a targeting signal to indicate that the lipoprotein should stay in the inner membrane). The polypeptide is Outer-membrane lipoprotein carrier protein (Francisella philomiragia subsp. philomiragia (strain ATCC 25017 / CCUG 19701 / FSC 153 / O#319-036)).